A 24-amino-acid chain; its full sequence is Humanin-like 13 (24 aa).

It belongs to the humanin family.

It is found in the secreted. The protein localises to the cytoplasm. In terms of biological role, plays a role as a neuroprotective and antiapoptotic factor. In Homo sapiens (Human), this protein is Humanin-like 13.